Here is a 238-residue protein sequence, read N- to C-terminus: Xyloglucan-specific endo-beta-1,4-glucanase A (238 aa).

Positions 1-14 are cleaved as a signal peptide; sequence MKLSLLSLATLASA.

This sequence belongs to the glycosyl hydrolase 12 (cellulase H) family.

The protein localises to the secreted. The catalysed reaction is xyloglucan + H2O = xyloglucan oligosaccharides.. Catalyzes endohydrolysis of 1,4-beta-D-glucosidic linkages in xyloglucan with retention of the beta-configuration of the glycosyl residues. Specific for xyloglucan and does not hydrolyze other cell wall components. The sequence is that of Xyloglucan-specific endo-beta-1,4-glucanase A (xgeA) from Aspergillus aculeatus.